Consider the following 397-residue polypeptide: Ribosomal RNA large subunit methyltransferase I (397 aa).

The PUA domain maps to 2–81 (STTVYLQKDR…EQIDTEFFVR (80 aa)).

It belongs to the methyltransferase superfamily. RlmI family.

Its subcellular location is the cytoplasm. The catalysed reaction is cytidine(1962) in 23S rRNA + S-adenosyl-L-methionine = 5-methylcytidine(1962) in 23S rRNA + S-adenosyl-L-homocysteine + H(+). Specifically methylates the cytosine at position 1962 (m5C1962) of 23S rRNA. This chain is Ribosomal RNA large subunit methyltransferase I, found in Tolumonas auensis (strain DSM 9187 / NBRC 110442 / TA 4).